A 639-amino-acid polypeptide reads, in one-letter code: Serine/threonine-protein kinase PAK mbt (639 aa).

The region spanning I11–G24 is the CRIB domain. The linker stretch occupies residues F25–N367. Disordered regions lie at residues H79–Y195 and R222–R345. Composition is skewed to low complexity over residues N91 to G129, V138 to P159, P227 to P241, and Q274 to H295. Basic residues predominate over residues P296–L308. Low complexity predominate over residues A309–G331. A Protein kinase domain is found at L368–L619. Residues I374–V382 and K397 each bind ATP. The active-site Proton acceptor is D487. S521 carries the phosphoserine modification. T525 carries the post-translational modification Phosphothreonine.

It belongs to the protein kinase superfamily. STE Ser/Thr protein kinase family. STE20 subfamily. Interacts tightly with GTP-bound but not GDP-bound Cdc42 and weakly with Rac1. Mg(2+) is required as a cofactor. Autophosphorylated when activated by Cdc42. Expressed in adult brain and eye. High levels detected in developing photoreceptor cells and future bristle cells, and lower levels in cone and pigment cells, as detected in third instar eye imaginal disks (at protein level).

It localises to the cell junction. The protein localises to the adherens junction. It is found in the cell membrane. The enzyme catalyses L-seryl-[protein] + ATP = O-phospho-L-seryl-[protein] + ADP + H(+). It carries out the reaction L-threonyl-[protein] + ATP = O-phospho-L-threonyl-[protein] + ADP + H(+). Its function is as follows. Involved in neurogenesis of the adult central nervous system, and together with Cdc42, regulates photoreceptor cell morphogenesis. Phosphorylates exogenous substrates when activated by Cdc42. This Drosophila melanogaster (Fruit fly) protein is Serine/threonine-protein kinase PAK mbt.